The chain runs to 198 residues: Cyclotides mra4/mra5 (198 aa).

The N-terminal stretch at 1–22 (MESNKMVVGVLLIAAFALPALA) is a signal peptide. Residues 23–79 (LFERDVITHETIEAVLKKSTPNSNTMLQEDAINALTGKTLISQTILEETLLKNGVVG) constitute a propeptide that is removed on maturation. 3 cysteine pairs are disulfide-bonded: Cys84/Cys100, Cys88/Cys102, and Cys93/Cys107. A propeptide spanning residues 111 to 163 (SLALPTLEKDVITPEALEAVLKSNGGAIVNTKTIISNAIFEETLLNNANHVLG) is cleaved from the precursor. 3 disulfides stabilise this stretch: Cys167–Cys183, Cys171–Cys185, and Cys176–Cys190. The propeptide occupies 194–198 (SLALN).

This sequence belongs to the cyclotide family. Bracelet subfamily. In terms of processing, these are cyclic peptides. Post-translationally, the mature peptides contain 3 disulfide bonds each.

Its function is as follows. Probably participates in a plant defense mechanism. The protein is Cyclotides mra4/mra5 of Melicytus ramiflorus (Whitey wood).